The chain runs to 352 residues: Protein MGF 360-16R (352 aa).

This sequence belongs to the asfivirus MGF 360 family.

Functionally, plays a role in virus cell tropism, and may be required for efficient virus replication in macrophages. The sequence is that of Protein MGF 360-16R from Ornithodoros (relapsing fever ticks).